The sequence spans 610 residues: Membrane protein insertase YidC (610 aa).

A helical transmembrane segment spans residues 7–27 (FFITIALSILILALWQVFYLG). The segment at 36-82 (QARIEEQQRQAQQAAQNRQASSSTGDTPQMPANPDSIPGQGDTKAAG) is disordered. Over residues 44–55 (RQAQQAAQNRQA) the composition is skewed to low complexity. A run of 5 helical transmembrane segments spans residues 358–378 (FDLLIDWGWFYFITKPMFYLI), 387–407 (NFGVAILVVTVLLKALFFPLA), 458–478 (WPVLVQIPVFFALYKVLYVTI), 510–530 (TVPHFLMIGVWPIIMGITMFL), and 546–566 (IFTWMPIIFTFMLASFPAGLV).

It belongs to the OXA1/ALB3/YidC family. Type 1 subfamily. Interacts with the Sec translocase complex via SecD. Specifically interacts with transmembrane segments of nascent integral membrane proteins during membrane integration.

The protein localises to the cell inner membrane. Its function is as follows. Required for the insertion and/or proper folding and/or complex formation of integral membrane proteins into the membrane. Involved in integration of membrane proteins that insert both dependently and independently of the Sec translocase complex, as well as at least some lipoproteins. Aids folding of multispanning membrane proteins. The polypeptide is Membrane protein insertase YidC (Brucella suis biovar 1 (strain 1330)).